The primary structure comprises 131 residues: Histone H2A.2 (131 aa).

Positions 1–22 (MSGGKGKAGSSEKASTSRSAKA) are disordered. Ser2 is modified (N-acetylserine). 2 positions are modified to N6-acetyllysine: Lys5 and Lys7. Gln105 carries the N5-methylglutamine modification. At Ser128 the chain carries Phosphoserine. The [ST]-Q motif motif lies at 128–129 (SQ).

Belongs to the histone H2A family. The nucleosome is a histone octamer containing two molecules each of H2A, H2B, H3 and H4 assembled in one H3-H4 heterotetramer and two H2A-H2B heterodimers. The octamer wraps approximately 147 bp of DNA. Phosphorylated to form H2AS128ph (gamma-H2A) in response to DNA double-strand breaks (DSBs) generated by exogenous genotoxic agents and by stalled replication forks. Phosphorylation is dependent on the DNA damage checkpoint kinases MEC1/ATR and TEL1/ATM, spreads on either side of a detected DSB site and may mark the surrounding chromatin for recruitment of proteins required for DNA damage signaling and repair. Gamma-H2A is removed from the DNA prior to the strand invasion-primer extension step of the repair process and subsequently dephosphorylated. Dephosphorylation is necessary for efficient recovery from the DNA damage checkpoint. In terms of processing, acetylated by ESA1 to form H2AK4ac and H2AK7ac.

It localises to the nucleus. Its subcellular location is the chromosome. In terms of biological role, core component of nucleosome which plays a central role in DNA double strand break (DSB) repair. Nucleosomes wrap and compact DNA into chromatin, limiting DNA accessibility to the cellular machineries which require DNA as a template. Histones thereby play a central role in transcription regulation, DNA repair, DNA replication and chromosomal stability. DNA accessibility is regulated via a complex set of post-translational modifications of histones, also called histone code, and nucleosome remodeling. This is Histone H2A.2 (HTA2) from Debaryomyces hansenii (strain ATCC 36239 / CBS 767 / BCRC 21394 / JCM 1990 / NBRC 0083 / IGC 2968) (Yeast).